We begin with the raw amino-acid sequence, 462 residues long: Integrator complex subunit 12 (462 aa).

The tract at residues 42–129 is disordered; the sequence is GIDSSYRPSQ…LEKPETQSSP (88 aa). Residues 59–86 show a composition bias toward polar residues; sequence ISSTKNISIKQEPKISSSLPSGNNNGKV. Lysine 68 is covalently cross-linked (Glycyl lysine isopeptide (Lys-Gly) (interchain with G-Cter in SUMO2)). Over residues 88 to 124 the composition is skewed to basic and acidic residues; that stretch reads TTEKVKKEAEKRPADKMKSDITEGVDIPKKPRLEKPE. Phosphoserine is present on serine 128. The PHD-type zinc finger occupies 159 to 215; that stretch reads GLACVVCRQMMVASGNQLVECQECHNLYHRDCHKPQVTDKEANDPRLVWYCARCTRQ. Lysine 254 participates in a covalent cross-link: Glycyl lysine isopeptide (Lys-Gly) (interchain with G-Cter in SUMO2). Polar residues predominate over residues 301–328; the sequence is SSAGPSTAKLSSTTQNSTGKPATSSANQ. Residues 301 to 462 are disordered; the sequence is SSAGPSTAKL…KKAAQKKLKK (162 aa). Composition is skewed to low complexity over residues 347-358 and 396-437; these read KIGSNNSTTPTV and GNSS…GPTS. Positions 449-462 are enriched in basic residues; it reads QMVKKKAAQKKLKK.

It belongs to the Integrator subunit 12 family. As to quaternary structure, component of the Integrator complex, composed of core subunits INTS1, INTS2, INTS3, INTS4, INTS5, INTS6, INTS7, INTS8, INTS9/RC74, INTS10, INTS11/CPSF3L, INTS12, INTS13, INTS14 and INTS15. The core complex associates with protein phosphatase 2A subunits PPP2CA and PPP2R1A, to form the Integrator-PP2A (INTAC) complex. Dephosphorylated at Ser-128 by the PNUTS-PP1 complex, promoting RNA polymerase II transcription pause-release.

Its subcellular location is the nucleus. Its function is as follows. Component of the integrator complex, a multiprotein complex that terminates RNA polymerase II (Pol II) transcription in the promoter-proximal region of genes. The integrator complex provides a quality checkpoint during transcription elongation by driving premature transcription termination of transcripts that are unfavorably configured for transcriptional elongation: the complex terminates transcription by (1) catalyzing dephosphorylation of the C-terminal domain (CTD) of Pol II subunit POLR2A/RPB1 and SUPT5H/SPT5, (2) degrading the exiting nascent RNA transcript via endonuclease activity and (3) promoting the release of Pol II from bound DNA. The integrator complex is also involved in terminating the synthesis of non-coding Pol II transcripts, such as enhancer RNAs (eRNAs), small nuclear RNAs (snRNAs), telomerase RNAs and long non-coding RNAs (lncRNAs). Mediates recruitment of cytoplasmic dynein to the nuclear envelope, probably as component of the integrator complex. This chain is Integrator complex subunit 12 (INTS12), found in Macaca fascicularis (Crab-eating macaque).